We begin with the raw amino-acid sequence, 253 residues long: Sulfate transporter CysZ (253 aa).

4 helical membrane passes run 31–51 (FVIL…WWLF), 72–92 (LSYI…GYFF), 151–171 (IVLL…PVLW), and 222–242 (IPVL…AMWV).

Belongs to the CysZ family.

Its subcellular location is the cell inner membrane. High affinity, high specificity proton-dependent sulfate transporter, which mediates sulfate uptake. Provides the sulfur source for the cysteine synthesis pathway. The protein is Sulfate transporter CysZ of Escherichia fergusonii (strain ATCC 35469 / DSM 13698 / CCUG 18766 / IAM 14443 / JCM 21226 / LMG 7866 / NBRC 102419 / NCTC 12128 / CDC 0568-73).